Consider the following 37-residue polypeptide: Large ribosomal subunit protein bL36 (37 aa).

The protein belongs to the bacterial ribosomal protein bL36 family.

The sequence is that of Large ribosomal subunit protein bL36 from Acidovorax ebreus (strain TPSY) (Diaphorobacter sp. (strain TPSY)).